A 144-amino-acid polypeptide reads, in one-letter code: Large ribosomal subunit protein uL15 (144 aa).

The tract at residues Met-1–Gly-49 is disordered. The segment covering Arg-21–Ala-31 has biased composition (gly residues).

It belongs to the universal ribosomal protein uL15 family. In terms of assembly, part of the 50S ribosomal subunit.

In terms of biological role, binds to the 23S rRNA. The protein is Large ribosomal subunit protein uL15 of Shewanella loihica (strain ATCC BAA-1088 / PV-4).